The following is a 169-amino-acid chain: Probable metallophosphoesterase YsnB (169 aa).

Asp-8, His-10, Asp-35, Asn-54, His-78, His-107, and His-109 together coordinate Mn(2+).

It belongs to the metallophosphoesterase superfamily. YfcE family. The cofactor is Mn(2+).

The sequence is that of Probable metallophosphoesterase YsnB (ysnB) from Bacillus subtilis (strain 168).